Here is a 586-residue protein sequence, read N- to C-terminus: 2-succinyl-5-enolpyruvyl-6-hydroxy-3-cyclohexene-1-carboxylate synthase (586 aa).

This sequence belongs to the TPP enzyme family. MenD subfamily. Homodimer. Mg(2+) serves as cofactor. Mn(2+) is required as a cofactor. It depends on thiamine diphosphate as a cofactor.

The enzyme catalyses isochorismate + 2-oxoglutarate + H(+) = 5-enolpyruvoyl-6-hydroxy-2-succinyl-cyclohex-3-ene-1-carboxylate + CO2. It functions in the pathway quinol/quinone metabolism; 1,4-dihydroxy-2-naphthoate biosynthesis; 1,4-dihydroxy-2-naphthoate from chorismate: step 2/7. Its pathway is cofactor biosynthesis; phylloquinone biosynthesis. Its function is as follows. Catalyzes the thiamine diphosphate-dependent decarboxylation of 2-oxoglutarate and the subsequent addition of the resulting succinic semialdehyde-thiamine pyrophosphate anion to isochorismate to yield 2-succinyl-5-enolpyruvyl-6-hydroxy-3-cyclohexene-1-carboxylate (SEPHCHC). The protein is 2-succinyl-5-enolpyruvyl-6-hydroxy-3-cyclohexene-1-carboxylate synthase of Acaryochloris marina (strain MBIC 11017).